A 490-amino-acid polypeptide reads, in one-letter code: ATP synthase subunit beta, chloroplastic (490 aa).

169–176 (GGAGVGKT) is an ATP binding site.

It belongs to the ATPase alpha/beta chains family. In terms of assembly, F-type ATPases have 2 components, CF(1) - the catalytic core - and CF(0) - the membrane proton channel. CF(1) has five subunits: alpha(3), beta(3), gamma(1), delta(1), epsilon(1). CF(0) has four main subunits: a(1), b(1), b'(1) and c(9-12).

It is found in the plastid. Its subcellular location is the chloroplast thylakoid membrane. It carries out the reaction ATP + H2O + 4 H(+)(in) = ADP + phosphate + 5 H(+)(out). Produces ATP from ADP in the presence of a proton gradient across the membrane. The catalytic sites are hosted primarily by the beta subunits. This is ATP synthase subunit beta, chloroplastic from Cyanidium caldarium (Red alga).